The following is a 769-amino-acid chain: Sensor histidine kinase ComP (769 aa).

Residues 1–9 lie on the Cytoplasmic side of the membrane; it reads MKNLIKKFT. A helical membrane pass occupies residues 10-33; it reads IAVIVLSILYISYTTYISMNGIII. The Extracellular segment spans residues 34–113; the sequence is GTKIHKNDKS…DFDLVTLNRP (80 aa). Residues 114 to 134 traverse the membrane as a helical segment; that stretch reads YSFFLFVLPLFFYFLSIICIF. Over 135 to 144 the chain is Cytoplasmic; that stretch reads YILKVNKKRR. Residues 145–167 form a helical membrane-spanning segment; that stretch reads SFAAYILILLLLDISIAYISAGG. Residues 168 to 235 lie on the Extracellular side of the membrane; it reads PFRGHIINRY…QDYLQVDIDF (68 aa). Residues 236–257 traverse the membrane as a helical segment; that stretch reads LATLNLVSFATLTLFSFSAIYL. Residues 258-272 are Cytoplasmic-facing; sequence HLNKYKYAEHSFILK. The chain crosses the membrane as a helical span at residues 273–295; it reads LLILTNTLSFAPFLIFFVLPIIF. The Extracellular segment spans residues 296-299; it reads TGNY. The chain crosses the membrane as a helical span at residues 300 to 323; sequence IFPALASASLLVLIPFGLVYQFVA. Residues 324–337 are Cytoplasmic-facing; it reads NKMFDIEFILGRMR. A helical membrane pass occupies residues 338–357; the sequence is YYALLAMIPTLLIVGALVLF. Residues 358–361 are Extracellular-facing; that stretch reads DVMD. The helical transmembrane segment at 362–383 threads the bilayer; sequence IQMNPVRQTVFFFVVMFAVFYF. At 384-769 the chain is on the cytoplasmic side; the sequence is KEVMDFKFRL…GFKADIEIEL (386 aa). In terms of domain architecture, Histidine kinase spans 571-769; sequence LARDLHDSVL…GFKADIEIEL (199 aa). H576 bears the Phosphohistidine; by autocatalysis mark.

In terms of processing, autophosphorylates on a histidine and transfers the phosphate group onto an aspartate in ComA, thus activating it.

The protein resides in the cell membrane. It catalyses the reaction ATP + protein L-histidine = ADP + protein N-phospho-L-histidine.. Its function is as follows. Sensor in the two-component regulatory system ComP/ComA involved in a major quorum response pathway that regulates the development of genetic competence. Plays a role in sporulation, at least partly interchangeable with that of SpoIIJ. Probably activates ComA by phosphorylation. This chain is Sensor histidine kinase ComP (comP), found in Bacillus subtilis (strain 168).